A 279-amino-acid chain; its full sequence is Thermitase (279 aa).

Aspartate 5 contributes to the Ca(2+) binding site. One can recognise a Peptidase S8 domain in the interval glutamine 12–valine 277. The active-site Charge relay system is the aspartate 38. Positions 47, 57, 60, 62, 64, and 66 each coordinate Ca(2+). Catalysis depends on histidine 71, which acts as the Charge relay system. Residues valine 82, asparagine 85, threonine 87, and isoleucine 89 each coordinate Ca(2+). Na(+) is bound by residues alanine 173, tyrosine 175, and alanine 178. Residues valine 199 and aspartate 201 each coordinate Ca(2+). Aspartate 201 is a binding site for Na(+). Residue serine 225 is the Charge relay system of the active site.

It belongs to the peptidase S8 family. Requires Ca(2+) as cofactor. Na(+) is required as a cofactor.

It is found in the secreted. It carries out the reaction Hydrolysis of proteins, including collagen.. The polypeptide is Thermitase (Thermoactinomyces vulgaris).